A 534-amino-acid chain; its full sequence is Protein BFR2 (534 aa).

The disordered stretch occupies residues 27–148 (ENASLFQHNE…ETEEAQQKRH (122 aa)). Phosphoserine occurs at positions 41 and 44. Over residues 52-77 (EETKKAHYLEVEKSKLRAEKGLELND) the composition is skewed to basic and acidic residues. Residues 86–161 (SRQALYEEVS…KLIQQETKQA (76 aa)) are a coiled coil. Composition is skewed to acidic residues over residues 93–114 (EVSE…EEDA) and 121–142 (SEDE…ETEE). S366, S372, and S379 each carry phosphoserine.

It belongs to the AATF family.

The protein resides in the nucleus. The protein localises to the nucleolus. Functionally, involved in endoplasmic reticulum to Golgi transport. Involved in a protein-transport step blocked by brefeldin A, which disrupts the Golgi apparatus and its incoming protein flux. May also be involved for mass growth or cell proliferation. The polypeptide is Protein BFR2 (BFR2) (Saccharomyces cerevisiae (strain ATCC 204508 / S288c) (Baker's yeast)).